The primary structure comprises 185 residues: Pycsar effector protein EcPycTM (185 aa).

3 consecutive transmembrane segments (helical) span residues 32–52 (ALLLAVNGATATILSNKVGYF), 63–83 (MVIFFLLLFMISIFIFMSVLL), and 141–161 (FILSCIAKQKFLFFSSAVSWI).

The protein resides in the cell inner membrane. Pycsar (pyrimidine cyclase system for antiphage resistance) provides immunity against bacteriophage. The pyrimidine cyclase (PycC) synthesizes cyclic nucleotides in response to infection; these serve as specific second messenger signals. The signals activate the adjacent effector, leading to bacterial cell death and abortive phage infection. A clade E Pycsar system. Its function is as follows. The effector component of a two-gene Pycsar system. Expression of this and adjacent cytidylate cyclase EcPycC (AC P0DV24) confers resistance to bacteriophage P1 and T5; this protein is required for resistance. When cells expressing the Pycsar system are infected by phage T5 at low multiplicity of infection (0.2 MOI) the culture survives, at 2.0 MOI bacteria enter growth arrest. The same cells enter growth arrest after exposure to 250 uM cCMP but not cUMP; this effector protein responds only to cCMP, usually produced by its cognate NTP cyclase. Some of the cells treated with cCMP have abnormal membrane protrusions, probably due to effects on membrane integrity. The sequence is that of Pycsar effector protein EcPycTM from Escherichia coli.